Here is a 264-residue protein sequence, read N- to C-terminus: Thymidylate synthase (264 aa).

DUMP is bound by residues Arg-21 and 126–127; that span reads RR. The active-site Nucleophile is the Cys-146. Residues 166–169, Asn-177, and 207–209 contribute to the dUMP site; these read RSAD and HLY. Residue Asp-169 coordinates (6R)-5,10-methylene-5,6,7,8-tetrahydrofolate. A (6R)-5,10-methylene-5,6,7,8-tetrahydrofolate-binding site is contributed by Ala-263.

It belongs to the thymidylate synthase family. Bacterial-type ThyA subfamily. Homodimer.

Its subcellular location is the cytoplasm. It catalyses the reaction dUMP + (6R)-5,10-methylene-5,6,7,8-tetrahydrofolate = 7,8-dihydrofolate + dTMP. The protein operates within pyrimidine metabolism; dTTP biosynthesis. In terms of biological role, catalyzes the reductive methylation of 2'-deoxyuridine-5'-monophosphate (dUMP) to 2'-deoxythymidine-5'-monophosphate (dTMP) while utilizing 5,10-methylenetetrahydrofolate (mTHF) as the methyl donor and reductant in the reaction, yielding dihydrofolate (DHF) as a by-product. This enzymatic reaction provides an intracellular de novo source of dTMP, an essential precursor for DNA biosynthesis. The sequence is that of Thymidylate synthase from Bradyrhizobium diazoefficiens (strain JCM 10833 / BCRC 13528 / IAM 13628 / NBRC 14792 / USDA 110).